The following is a 139-amino-acid chain: MNSYFVIALSALFVTLAVGSSLNLSDEQKDLAKQHREQCAEEVKLTEEEKAKVNAKDFNNPTENIKCFANCFFEKVGTLKDGELQESVVLEKLGALIGEEKTKAALEKCRTIKGENKCDTASKLYDCFESFKPAPEAKA.

The N-terminal stretch at 1–19 (MNSYFVIALSALFVTLAVG) is a signal peptide. Asn23 carries an N-linked (GlcNAc...) asparagine glycan. 3 cysteine pairs are disulfide-bonded: Cys39-Cys71, Cys67-Cys118, and Cys109-Cys127.

It belongs to the PBP/GOBP family. In terms of tissue distribution, expressed in ventral pits of larvae. In adults, it is not specifically expressed in chemosensory organs. Also expressed in stalk cells at the proximal tip of the wing disk.

It is found in the secreted. Functionally, present in the aqueous fluid surrounding olfactory sensory dendrites and are thought to aid in the capture and transport of hydrophobic odorants into and through this fluid. This chain is General odorant-binding protein 56a (Obp56a), found in Drosophila melanogaster (Fruit fly).